A 128-amino-acid polypeptide reads, in one-letter code: Small ribosomal subunit protein uS14m (128 aa).

This sequence belongs to the universal ribosomal protein uS14 family. Component of the mitochondrial ribosome small subunit (28S) which comprises a 12S rRNA and about 30 distinct proteins. Interacts with LIAT1.

It is found in the mitochondrion. In Bos taurus (Bovine), this protein is Small ribosomal subunit protein uS14m (MRPS14).